The primary structure comprises 593 residues: MRDSTGAGNSLVHKRSPLRRNQKTSASLNKLSLQDGHKAKKPACKFEEGQDVLARWSDGLFYLGTIKKINILKQSCFIIFEDSSKSWVLWKDIQTGATGSGEMVCTICQEEYSEAPNEMVICDKCGQGYHQLCHTPHIDSSVIDSDEKWLCRQCVFATTTKRGGALKKGPNAKALQVMKQTLPYSVADLEWDAGHKTNVQQCYCYCGGPGDWYLKMLQCCKCKQWFHEACVQCLQKPMLFGDRFYTFICSVCSSGPEYLKRLPLQWVDIAHLCLYNLSVIHKKKYFDSELELMTYINENWDRLHPGELADTPKSERYEHVLEALNDYKTMFMSGKEIKKKKHLFGLRIRVPPVPPNVAFKAEKEPEGTSHEFKIKGRKASKPTSDSREVSNGIEKKGKKKSVGRPPGPYTRKMIQKTAELPLDKESVSENPTLDLPCSIGRTEGIAHSSNTSDVDLTGASSANETTSASISRHCGLSDSRKRTRTGRSWPAAIPHLRRRRGRLPRRALQTQNSEVVKDDEGKEDYQFEELNTEILNNLADQELQLNHLKNSITSYFGAAGRIACGEKYRVLARRVTLDGKVQYLVEWEGATAS.

Positions 1–24 are disordered; the sequence is MRDSTGAGNSLVHKRSPLRRNQKT. Basic residues predominate over residues 12-22; the sequence is VHKRSPLRRNQ. Residue threonine 24 is modified to Phosphothreonine. A Tudor domain is found at 44-101; it reads CKFEEGQDVLARWSDGLFYLGTIKKINILKQSCFIIFEDSSKSWVLWKDIQTGATGSG. PHD-type zinc fingers lie at residues 102-157 and 201-255; these read EMVC…CVFA and QCYC…CSSG. Disordered stretches follow at residues 357-410 and 444-486; these read VAFK…GPYT and GIAH…TRTG. Lysine 360 participates in a covalent cross-link: Glycyl lysine isopeptide (Lys-Gly) (interchain with G-Cter in SUMO2). Residues 360–374 are compositionally biased toward basic and acidic residues; that stretch reads KAEKEPEGTSHEFKI. Residues 447–470 are compositionally biased toward polar residues; sequence HSSNTSDVDLTGASSANETTSASI. At serine 452 the chain carries Phosphoserine. Lysine 522 participates in a covalent cross-link: Glycyl lysine isopeptide (Lys-Gly) (interchain with G-Cter in SUMO2).

This sequence belongs to the Polycomblike family. As to quaternary structure, associates with the PRC2 complex, which consists of the core components EED, EZH1 or EZH2, SUZ12, and RBBP4, and various combinations of accessory subunits including AEBP2, JARID2, PHF19, MTF2 and EPOP. Forms a dimeric PRC2.1 (class 1, PRC-PCL) complex consisting of at least SUZ12, RBBP4, and PHF19 or MTF2; PHF19 and MTF2 stabilize the dimeric structure which enhances PRC2 interaction with chromatin.

It is found in the nucleus. Polycomb group (PcG) protein that specifically binds histone H3 trimethylated at 'Lys-36' (H3K36me3) and recruits the PRC2 complex, thus enhancing PRC2 H3K27me3 methylation activity. Regulates the transcriptional networks during embryonic stem cell self-renewal and differentiation. Promotes recruitment of the PRC2 complex to the inactive X chromosome in differentiating XX ES cells and PRC2 recruitment to target genes in undifferentiated ES cells. Required to repress Hox genes by enhancing H3K27me3 methylation of the PRC2 complex. In some conditions may act as an inhibitor of PRC2 activity: able to activate the CDKN2A gene and promote cellular senescence by suppressing the catalytic activity of the PRC2 complex locally. Binds to the metal-regulating-element (MRE) of MT1A gene promoter. This is Metal-response element-binding transcription factor 2 (Mtf2) from Mus musculus (Mouse).